The primary structure comprises 254 residues: Isoprenyl transferase (254 aa).

D34 is a catalytic residue. D34 provides a ligand contact to Mg(2+). Substrate is bound by residues 35–38, W39, R47, H51, and 79–81; these read GNGR and STE. Catalysis depends on N82, which acts as the Proton acceptor. Substrate-binding positions include W83, R85, R202, and 208–210; that span reads RIS. E221 is a Mg(2+) binding site.

This sequence belongs to the UPP synthase family. As to quaternary structure, homodimer. Requires Mg(2+) as cofactor.

Catalyzes the condensation of isopentenyl diphosphate (IPP) with allylic pyrophosphates generating different type of terpenoids. The polypeptide is Isoprenyl transferase (Staphylococcus saprophyticus subsp. saprophyticus (strain ATCC 15305 / DSM 20229 / NCIMB 8711 / NCTC 7292 / S-41)).